Here is a 983-residue protein sequence, read N- to C-terminus: Nitrate reductase [NADPH] (983 aa).

Composition is skewed to low complexity over residues 1–14 (MTIS…SSKT) and 26–48 (SSSS…SSPT). Residues 1 to 50 (MTISTTSSSTSSKTSSEKGDDLKGFSSSSSPASSRSSSATTPEPSSPTVL) are disordered. Cysteine 184 contacts Mo-molybdopterin. The Cytochrome b5 heme-binding domain maps to 585 to 662 (DTIITAADLA…LRDFHLGRLE (78 aa)). Residues histidine 622 and histidine 645 each contribute to the heme site. The region spanning 688–815 (KKWRATRLVS…KGPLGSFTYL (128 aa)) is the FAD-binding FR-type domain. Residues 746 to 749 (RAYT), 763 to 767 (LIKVY), phenylalanine 768, phenylalanine 780, 784 to 786 (KMT), serine 841, and threonine 844 each bind FAD. 952 to 961 (LALVCGPPPM) contributes to the NADP(+) binding site.

The protein belongs to the nitrate reductase family. In terms of assembly, homodimer. The cofactor is FAD. Heme serves as cofactor. It depends on Mo-molybdopterin as a cofactor.

The enzyme catalyses nitrite + NADP(+) + H2O = nitrate + NADPH + H(+). The protein operates within nitrogen metabolism; nitrate reduction (assimilation). Functionally, nitrate reductase is a key enzyme involved in the first step of nitrate assimilation in plants, fungi and bacteria. The polypeptide is Nitrate reductase [NADPH] (NAR1) (Mycosarcoma maydis (Corn smut fungus)).